A 675-amino-acid chain; its full sequence is Methionine--tRNA ligase (675 aa).

The 'HIGH' region signature appears at 15–25 (PYANGSIHLGH). Residues Cys-146, Cys-149, Cys-159, and Cys-162 each coordinate Zn(2+). Residues 332–336 (KMSKS) carry the 'KMSKS' region motif. ATP is bound at residue Lys-335. The 103-residue stretch at 573-675 (DFAKVDMRIA…SGAQPGMQVK (103 aa)) folds into the tRNA-binding domain.

The protein belongs to the class-I aminoacyl-tRNA synthetase family. MetG type 1 subfamily. Homodimer. Requires Zn(2+) as cofactor.

It localises to the cytoplasm. It carries out the reaction tRNA(Met) + L-methionine + ATP = L-methionyl-tRNA(Met) + AMP + diphosphate. Is required not only for elongation of protein synthesis but also for the initiation of all mRNA translation through initiator tRNA(fMet) aminoacylation. The polypeptide is Methionine--tRNA ligase (Yersinia pseudotuberculosis serotype O:1b (strain IP 31758)).